We begin with the raw amino-acid sequence, 80 residues long: MLRANVVVSLVIFAALMQCMNGKENITPWIYSMKQPVSCNREHSEIGICLSGIDDDIQNDGKCWKFCLMVAKSGGYNADK.

Positions 1–22 are cleaved as a signal peptide; it reads MLRANVVVSLVIFAALMQCMNG.

It belongs to the DEFL family.

The protein localises to the secreted. The protein is Putative defensin-like protein 28 of Arabidopsis thaliana (Mouse-ear cress).